Here is a 252-residue protein sequence, read N- to C-terminus: CD99 antigen-like protein 2 (252 aa).

Positions 1 to 23 (MEKTLWTWTLLAVFSLLVVKGMS) are cleaved as a signal peptide. Residues 30–170 (DALGDDDDDE…DLDPADDNNY (141 aa)) are disordered. A compositionally biased stretch (low complexity) spans 57–68 (AAVKPTLKPVKP). Over residues 96–120 (NDIKGKGKDSGKGDKEVGGGSRDDG) the composition is skewed to basic and acidic residues. Residues 178–198 (TIAGIVSAVAMALVGAVSSYI) traverse the membrane as a helical segment.

The protein belongs to the CD99 family.

The protein localises to the cell membrane. Its subcellular location is the cell junction. Functionally, may function as a homophilic adhesion molecule. In Danio rerio (Zebrafish), this protein is CD99 antigen-like protein 2 (cd99l2).